Here is a 450-residue protein sequence, read N- to C-terminus: MRECISVHVGQAGVQMGNACWELYCLEHGIQPDGQMPSDKTIGGGDDSFNTFFSETGAGKHVPRAIFVDLEPSVIDEVRTGTYRQLFHPEQLISGKEDAANNYARGHYTIGKEIIDQVLDRMRKLADQCTGLQGFLVFHSFGGGTGSGFTSLLMERLSVDYGKKSKLEFAIYPAPQVSTAVVEPYNSILTTHTTLEHSDCAFMVDNEAIYDICRRNLDIERPSYTNLNRLISQIVSSITASLRFDGALNVDLTEFQTNLVPYPRIHFPLATYAPVISAEKAYHEQLSVAEITNACFEPANQMVKCDPRHGKYMACCLLYRGDVVPKDVNAAIAAIKTKRSIQFVDWCPTGFKVGINYQPPTAVPGGDLAKVQRAVCMLSNTTAIAEAWARLDHKFDLMYAKRAFVHWYVGEGMEEGEFSEAREDMAALEKDYEEVGLDSYEGEEDEGEEY.

Positions methionine 1 to cysteine 4 match the MREC motif motif. Glutamine 11 is a binding site for GTP. Residue lysine 40 is modified to N6-acetyllysine. Glutamate 71, serine 140, glycine 144, threonine 145, threonine 179, asparagine 206, and asparagine 228 together coordinate GTP. Glutamate 71 is a binding site for Mg(2+). The active site involves glutamate 254. 5-glutamyl polyglutamate is present on glutamate 444.

This sequence belongs to the tubulin family. As to quaternary structure, dimer of alpha and beta chains. A typical microtubule is a hollow water-filled tube with an outer diameter of 25 nm and an inner diameter of 15 nM. Alpha-beta heterodimers associate head-to-tail to form protofilaments running lengthwise along the microtubule wall with the beta-tubulin subunit facing the microtubule plus end conferring a structural polarity. Microtubules usually have 13 protofilaments but different protofilament numbers can be found in some organisms and specialized cells. It depends on Mg(2+) as a cofactor. Post-translationally, some glutamate residues at the C-terminus are polyglycylated, resulting in polyglycine chains on the gamma-carboxyl group. Glycylation is mainly limited to tubulin incorporated into axonemes (cilia and flagella) whereas glutamylation is prevalent in neuronal cells, centrioles, axonemes, and the mitotic spindle. Both modifications can coexist on the same protein on adjacent residues, and lowering polyglycylation levels increases polyglutamylation, and reciprocally. The precise function of polyglycylation is still unclear. In terms of processing, some glutamate residues at the C-terminus are polyglutamylated, resulting in polyglutamate chains on the gamma-carboxyl group. Polyglutamylation plays a key role in microtubule severing by spastin (SPAST). SPAST preferentially recognizes and acts on microtubules decorated with short polyglutamate tails: severing activity by SPAST increases as the number of glutamates per tubulin rises from one to eight, but decreases beyond this glutamylation threshold. Acetylation of alpha chains at Lys-40 is located inside the microtubule lumen. This modification has been correlated with increased microtubule stability, intracellular transport and ciliary assembly. Post-translationally, undergoes a tyrosination/detyrosination cycle, the cyclic removal and re-addition of a C-terminal tyrosine residue by the enzymes tubulin tyrosine carboxypeptidase (MATCAP, VASH1 or VASH2) and tubulin tyrosine ligase (TTL), respectively. In terms of processing, tyrosination promotes microtubule interaction with CAP-Gly microtubule plus-end tracking proteins. Tyrosinated tubulins regulate the initiation of dynein-driven motility. Detyrosination is involved in metaphase plate congression by guiding chromosomes during mitosis. Detyrosination increases microtubules-dependent mechanotransduction in dystrophic cardiac and skeletal muscle. In cardiomyocytes, detyrosinated microtubules are required to resist to contractile compression during contraction.

Its subcellular location is the cytoplasm. It localises to the cytoskeleton. The catalysed reaction is GTP + H2O = GDP + phosphate + H(+). Functionally, tubulin is the major constituent of microtubules, a cylinder consisting of laterally associated linear protofilaments composed of alpha- and beta-tubulin heterodimers. Microtubules grow by the addition of GTP-tubulin dimers to the microtubule end, where a stabilizing cap forms. Below the cap, tubulin dimers are in GDP-bound state, owing to GTPase activity of alpha-tubulin. This is Tubulin alpha chain from Notophthalmus viridescens (Eastern newt).